A 424-amino-acid chain; its full sequence is MTAITDIIAREILDSRGNPTVEVDVYLEDGSMGRAAVPSGASTGAHEAVELRDGGKRYLGKGVEKAVEAANTEIFDAIGGIDAENQIQIDNIMIELDGTPNKSRLGANAILGVSLAVAKAAAQASGLPLYRYVGGASASLLPVPMMNIINGGAHADNPIDFQEFMILPVGADTIAEAVRMGSEVFHTLRKELAAQGHNTNVGDEGGFAPGLKSASEALDFIVKSVEKAGYKPGEDIYLGLDCASTEFFKDGKYVLEGEGRTLESGAMAEYLAELAAKYPIISIEDGMAEDDWDGWKALTDLAGKKIQLVGDDLFVTNSARLRDGIRMGVANSILVKVNQIGSLTETLDAVNTAHKAAYTAVMSHRSGETEDSTIADLAVATNCGQIKTGSLSRSDRLAKYNQLIRIEEGLGPQAQYAGRSIIRG.

A (2R)-2-phosphoglycerate-binding site is contributed by Gln-162. Catalysis depends on Glu-204, which acts as the Proton donor. The Mg(2+) site is built by Asp-241, Glu-284, and Asp-311. (2R)-2-phosphoglycerate-binding residues include Lys-336, Arg-365, Ser-366, and Lys-387. The active-site Proton acceptor is the Lys-336.

It belongs to the enolase family. The cofactor is Mg(2+).

The protein resides in the cytoplasm. It is found in the secreted. The protein localises to the cell surface. The catalysed reaction is (2R)-2-phosphoglycerate = phosphoenolpyruvate + H2O. It functions in the pathway carbohydrate degradation; glycolysis; pyruvate from D-glyceraldehyde 3-phosphate: step 4/5. Catalyzes the reversible conversion of 2-phosphoglycerate (2-PG) into phosphoenolpyruvate (PEP). It is essential for the degradation of carbohydrates via glycolysis. This chain is Enolase, found in Rhizobium etli (strain ATCC 51251 / DSM 11541 / JCM 21823 / NBRC 15573 / CFN 42).